We begin with the raw amino-acid sequence, 173 residues long: Lipoprotein signal peptidase (173 aa).

3 helical membrane passes run 9 to 29 (LPFL…ILVV), 37 to 57 (VIPV…GAAF), and 70 to 90 (ILLV…YLKS). Active-site residues include Asp124 and Asp146. Residues 142 to 162 (FNAADSFIVCCGIGLGVNLIL) traverse the membrane as a helical segment.

This sequence belongs to the peptidase A8 family.

It localises to the cell inner membrane. It catalyses the reaction Release of signal peptides from bacterial membrane prolipoproteins. Hydrolyzes -Xaa-Yaa-Zaa-|-(S,diacylglyceryl)Cys-, in which Xaa is hydrophobic (preferably Leu), and Yaa (Ala or Ser) and Zaa (Gly or Ala) have small, neutral side chains.. Its pathway is protein modification; lipoprotein biosynthesis (signal peptide cleavage). This protein specifically catalyzes the removal of signal peptides from prolipoproteins. The polypeptide is Lipoprotein signal peptidase (Treponema denticola (strain ATCC 35405 / DSM 14222 / CIP 103919 / JCM 8153 / KCTC 15104)).